The chain runs to 381 residues: N-acetyldiaminopimelate deacetylase (381 aa).

Aspartate 73 is a catalytic residue. The active-site Proton acceptor is the glutamate 132.

This sequence belongs to the peptidase M20A family. N-acetyldiaminopimelate deacetylase subfamily.

It carries out the reaction N-acetyl-(2S,6S)-2,6-diaminopimelate + H2O = (2S,6S)-2,6-diaminopimelate + acetate. The protein operates within amino-acid biosynthesis; L-lysine biosynthesis via DAP pathway; LL-2,6-diaminopimelate from (S)-tetrahydrodipicolinate (acetylase route): step 3/3. Functionally, catalyzes the conversion of N-acetyl-diaminopimelate to diaminopimelate and acetate. In Limosilactobacillus reuteri (strain DSM 20016) (Lactobacillus reuteri), this protein is N-acetyldiaminopimelate deacetylase.